The chain runs to 572 residues: MYRPSCLSYVLLVANMWSFAVCANAFIYGSYDPSHNIPIVALMTLCATGLWLSTSVVSFGIRYVRVRVSPEKTQNRTIYVSSGLPHFDPVYGVVKKCEPMGGGPAIELQVNPSWIHLLPTSPAINKVEVGQESAILGSTYSVVETGGEPKSLVAVKSGDSTLGFGARVYHEGMDVLMVPHHVWYNDKPHTALAKNGRSVDTEDWEVEAACADPRIDFVLVKVPTAVWAKLAVRSTKVLAPVHGTAVQTFGGQDSKQLFSGLGKAKALDNAWEFTHTAPTAKGWSGTPLYTRDGIVGMHTGYVDIGTSNRAINMHFIMSCLVSKMETLPPELGYREISLEDVGLRSFEFLEVEIENRGKVKLGKREFAWVPKGKAWADMLDDDDLPLPPKMVNGNLVWADAQESFDGALPLNCLRAAGRNVLPPKLNLVTINSPVDPPTKQVACPSEIVDHRLASLEKCLENLLQTLSQPQQKFSQNSLSSGGLKGDQELKLAPCYSKQESLFPPKPRATSSKPITTSSPGTPGRSPLPVSGKELGPSTQSSSKLSRKQRRRRSTKRPVQGSPSPASPPPTRT.

3 helical membrane passes run 7–27 (LSYV…NAFI), 37–57 (IPIV…TSVV), and 77–94 (TIYV…YGVV). The Peptidase S39 domain occupies 135–330 (ILGSTYSVVE…VSKMETLPPE (196 aa)). Active-site for protease activity residues include His181, Asp216, and Ser284. The interval 498–572 (QESLFPPKPR…SPASPPPTRT (75 aa)) is disordered. The span at 508–520 (ATSSKPITTSSPG) shows a compositional bias: polar residues. A compositionally biased stretch (basic residues) spans 544–555 (LSRKQRRRRSTK).

Post-translationally, the polyprotein is proteolytically cleaved into several chains by the viral protease.

The protein resides in the host membrane. In terms of biological role, responsible for cleavages of polyprotein P2A and replicase polyprotein P2AB. Functionally, covalently attached to the 5' extremity of the genomic and subgenomic RNAs. It may serve as a primer for the replicase. The sequence is that of Polyprotein P2A from Southern cowpea mosaic virus (SCPMV).